Here is a 528-residue protein sequence, read N- to C-terminus: Atypical kinase COQ8B, mitochondrial (528 aa).

The chain crosses the membrane as a helical span at residues leucine 93–alanine 109. The short motif at lysine 151–glutamine 154 is the KxGQ motif element. Positions methionine 187–leucine 419 constitute a Protein kinase domain. The AAAS motif signature appears at alanine 212 to serine 215. ATP-binding positions include serine 215, lysine 233, and methionine 320 to alanine 323. Catalysis depends on aspartate 363, which acts as the Proton acceptor. Residues asparagine 368 and aspartate 382 each coordinate ATP.

It belongs to the protein kinase superfamily. ADCK protein kinase family. As to quaternary structure, homodimer; homodimerizes via its transmembrane region. Interacts with COQ6 and COQ7. Interacts with the multi-subunit COQ enzyme complex, composed of at least COQ3, COQ4, COQ5, COQ6, COQ7 and COQ9. In terms of tissue distribution, in the kidney, expressed in glomeruli, predominantly in podocyte foot precesses, as well as in proximal tubules and collecting ducts (at protein level).

Its subcellular location is the mitochondrion membrane. It is found in the cytoplasm. It localises to the cytosol. The protein localises to the cell membrane. It functions in the pathway cofactor biosynthesis; ubiquinone biosynthesis. Its function is as follows. Atypical kinase involved in the biosynthesis of coenzyme Q, also named ubiquinone, an essential lipid-soluble electron transporter for aerobic cellular respiration. Its substrate specificity is still unclear: may act as a protein kinase that mediates phosphorylation of COQ3. According to other reports, acts as a small molecule kinase, possibly a lipid kinase that phosphorylates a prenyl lipid in the ubiquinone biosynthesis pathway, as suggested by its ability to bind coenzyme Q lipid intermediates. However, the small molecule kinase activity was not confirmed by another publication. Required for podocyte migration. The protein is Atypical kinase COQ8B, mitochondrial of Rattus norvegicus (Rat).